Here is a 230-residue protein sequence, read N- to C-terminus: 3,4-dihydroxy-2-butanone 4-phosphate synthase (230 aa).

D-ribulose 5-phosphate is bound by residues 38–39, Asp43, 151–155, and Glu175; these read RE and RRGHT. Position 39 (Glu39) interacts with Mg(2+). His154 contributes to the Mg(2+) binding site.

This sequence belongs to the DHBP synthase family. In terms of assembly, homodimer. The cofactor is Mg(2+). Requires Mn(2+) as cofactor.

It catalyses the reaction D-ribulose 5-phosphate = (2S)-2-hydroxy-3-oxobutyl phosphate + formate + H(+). The protein operates within cofactor biosynthesis; riboflavin biosynthesis; 2-hydroxy-3-oxobutyl phosphate from D-ribulose 5-phosphate: step 1/1. Functionally, catalyzes the conversion of D-ribulose 5-phosphate to formate and 3,4-dihydroxy-2-butanone 4-phosphate. The polypeptide is 3,4-dihydroxy-2-butanone 4-phosphate synthase (Vibrio harveyi (Beneckea harveyi)).